A 262-amino-acid polypeptide reads, in one-letter code: Indole-3-glycerol phosphate synthase (262 aa).

This sequence belongs to the TrpC family.

It catalyses the reaction 1-(2-carboxyphenylamino)-1-deoxy-D-ribulose 5-phosphate + H(+) = (1S,2R)-1-C-(indol-3-yl)glycerol 3-phosphate + CO2 + H2O. The protein operates within amino-acid biosynthesis; L-tryptophan biosynthesis; L-tryptophan from chorismate: step 4/5. This Bordetella bronchiseptica (strain ATCC BAA-588 / NCTC 13252 / RB50) (Alcaligenes bronchisepticus) protein is Indole-3-glycerol phosphate synthase.